A 31-amino-acid polypeptide reads, in one-letter code: Photosystem II reaction center protein T (31 aa).

Residues 3–23 (ALVYTFLLIGTLGIIFFAIFF) traverse the membrane as a helical segment.

This sequence belongs to the PsbT family. PSII is composed of 1 copy each of membrane proteins PsbA, PsbB, PsbC, PsbD, PsbE, PsbF, PsbH, PsbI, PsbJ, PsbK, PsbL, PsbM, PsbT, PsbY, PsbZ, Psb30/Ycf12, at least 3 peripheral proteins of the oxygen-evolving complex and a large number of cofactors. It forms dimeric complexes.

Its subcellular location is the plastid. It localises to the chloroplast thylakoid membrane. Found at the monomer-monomer interface of the photosystem II (PS II) dimer, plays a role in assembly and dimerization of PSII. PSII is a light-driven water plastoquinone oxidoreductase, using light energy to abstract electrons from H(2)O, generating a proton gradient subsequently used for ATP formation. The chain is Photosystem II reaction center protein T from Stigeoclonium helveticum (Green alga).